We begin with the raw amino-acid sequence, 122 residues long: S-adenosylmethionine decarboxylase proenzyme (122 aa).

The active-site Schiff-base intermediate with substrate; via pyruvic acid is S61. S61 bears the Pyruvic acid (Ser); by autocatalysis mark. H66 serves as the catalytic Proton acceptor; for processing activity. The active-site Proton donor; for catalytic activity is the C81.

The protein belongs to the prokaryotic AdoMetDC family. Type 1 subfamily. As to quaternary structure, heterotetramer of two alpha and two beta chains arranged as a dimer of alpha/beta heterodimers. The cofactor is pyruvate. Post-translationally, is synthesized initially as an inactive proenzyme. Formation of the active enzyme involves a self-maturation process in which the active site pyruvoyl group is generated from an internal serine residue via an autocatalytic post-translational modification. Two non-identical subunits are generated from the proenzyme in this reaction, and the pyruvate is formed at the N-terminus of the alpha chain, which is derived from the carboxyl end of the proenzyme. The post-translation cleavage follows an unusual pathway, termed non-hydrolytic serinolysis, in which the side chain hydroxyl group of the serine supplies its oxygen atom to form the C-terminus of the beta chain, while the remainder of the serine residue undergoes an oxidative deamination to produce ammonia and the pyruvoyl group blocking the N-terminus of the alpha chain.

It carries out the reaction S-adenosyl-L-methionine + H(+) = S-adenosyl 3-(methylsulfanyl)propylamine + CO2. The protein operates within amine and polyamine biosynthesis; S-adenosylmethioninamine biosynthesis; S-adenosylmethioninamine from S-adenosyl-L-methionine: step 1/1. Catalyzes the decarboxylation of S-adenosylmethionine to S-adenosylmethioninamine (dcAdoMet), the propylamine donor required for the synthesis of the polyamines spermine and spermidine from the diamine putrescine. In Prochlorococcus marinus (strain MIT 9211), this protein is S-adenosylmethionine decarboxylase proenzyme.